We begin with the raw amino-acid sequence, 536 residues long: MSKRPNFLVIVADDLGFSDIGAFGGEIATPNLDALAIAGLRLTDFHTASTCSPTRSMLLTGTDHHIAGIGTMAEALTPELEGKPGYEGHLNERVVALPELLREAGYQTLMAGKWHLGLKPEQTPHARGFERSFSLLPGAANHYGFEPPYDESTPRILKGTPALYVEDERYLDTLPEGFYSSDAFGDKLLQYLKERDQSRPFFAYLPFSAPHWPLQAPREIVEKYRGRYDAGPEALRQERLARLKELGLVEADVEAHPVLALTREWEALEDEERAKSARAMEVYAAMVERMDWNIGRVVDYLRRQGELDNTFVLFMSDNGAEGALLEAFPKFGPDLLGFLDRHYDNSLENIGRANSYVWYGPRWAQAATAPSRLYKAFTTQGGIRVPALVRYPRLSRQGAISHAFATVMDVTPTLLDLAGVRHPGKRWRGREIAEPRGRSWLGWLSGETEAAHDENTVTGWELFGMRAIRQGDWKAVYLPAPVGPATWQLYDLARDPGEIHDLADSQPGKLAELIEHWKRYVSETGVVEGASPFLVR.

The Ca(2+) site is built by Asp-13, Asp-14, and Cys-51. Cys-51 serves as the catalytic Nucleophile. Cys-51 carries the post-translational modification 3-oxoalanine (Cys). Residue His-115 is part of the active site. 2 residues coordinate Ca(2+): Asp-317 and Asn-318.

This sequence belongs to the sulfatase family. Monomer. The cofactor is Ca(2+). In terms of processing, the conversion to 3-oxoalanine (also known as C-formylglycine, FGly), of a serine or cysteine residue in prokaryotes and of a cysteine residue in eukaryotes, is critical for catalytic activity.

It is found in the cytoplasm. The enzyme catalyses an aryl sulfate + H2O = a phenol + sulfate + H(+). In terms of biological role, hydrolyzes the bond between sulfate and the aromatic ring in a compound such as 4-nitrocatechol sulfate. The protein is Arylsulfatase (atsA) of Pseudomonas aeruginosa (strain ATCC 15692 / DSM 22644 / CIP 104116 / JCM 14847 / LMG 12228 / 1C / PRS 101 / PAO1).